A 182-amino-acid polypeptide reads, in one-letter code: Adenine phosphoribosyltransferase (182 aa).

Belongs to the purine/pyrimidine phosphoribosyltransferase family. Homodimer.

The protein localises to the cytoplasm. The enzyme catalyses AMP + diphosphate = 5-phospho-alpha-D-ribose 1-diphosphate + adenine. It functions in the pathway purine metabolism; AMP biosynthesis via salvage pathway; AMP from adenine: step 1/1. In terms of biological role, catalyzes a salvage reaction resulting in the formation of AMP, that is energically less costly than de novo synthesis. This is Adenine phosphoribosyltransferase from Streptomyces coelicolor (strain ATCC BAA-471 / A3(2) / M145).